Here is a 436-residue protein sequence, read N- to C-terminus: 3-ketoacyl-CoA thiolase (436 aa).

Cys-99 (acyl-thioester intermediate) is an active-site residue. Residues His-392 and Cys-422 each act as proton acceptor in the active site.

Belongs to the thiolase-like superfamily. Thiolase family. Heterotetramer of two alpha chains (FadJ) and two beta chains (FadI).

Its subcellular location is the cytoplasm. The catalysed reaction is an acyl-CoA + acetyl-CoA = a 3-oxoacyl-CoA + CoA. It functions in the pathway lipid metabolism; fatty acid beta-oxidation. Catalyzes the final step of fatty acid oxidation in which acetyl-CoA is released and the CoA ester of a fatty acid two carbons shorter is formed. This chain is 3-ketoacyl-CoA thiolase, found in Escherichia coli (strain SMS-3-5 / SECEC).